A 546-amino-acid chain; its full sequence is Casein kinase I homolog 2 (546 aa).

2 stretches are compositionally biased toward polar residues: residues 1 to 33 (MSQV…SNVR) and 44 to 55 (HVSSNLNHNTGN). The tract at residues 1–67 (MSQVQSPLTA…ASYSGSQSRD (67 aa)) is disordered. Ser2 is modified (N-acetylserine). The region spanning 76-360 (YKIGKKIGEG…ETADGQYDWM (285 aa)) is the Protein kinase domain. ATP-binding positions include 82–90 (IGEGSFGVL) and Lys105. The Proton acceptor role is filled by Asp195. Disordered stretches follow at residues 373–425 (NKKP…QAQA) and 443–546 (QQAN…LGCC). Low complexity predominate over residues 412-425 (QQQQQQQAQAQAQA). The segment covering 453-465 (DDSHYDEEREASK) has biased composition (basic and acidic residues). At Ser455 the chain carries Phosphoserine. Residue Lys465 forms a Glycyl lysine isopeptide (Lys-Gly) (interchain with G-Cter in ubiquitin) linkage. The segment covering 475 to 496 (QQQTQQKYAQQQQKQMQQKSKQ) has biased composition (low complexity). The span at 497–530 (FANTGANGQTNKYPYNAQPTANDEQNAKNAAQDR) shows a compositional bias: polar residues. Positions 533–546 (NKSSKGFFSKLGCC) are enriched in low complexity. Residues Cys545 and Cys546 are each lipidated (S-palmitoyl cysteine).

This sequence belongs to the protein kinase superfamily. CK1 Ser/Thr protein kinase family. Casein kinase I subfamily. In terms of processing, palmitoylated by AKR1, which is required for proper plasma membrane localization of YCK2.

It is found in the cell membrane. The catalysed reaction is L-seryl-[protein] + ATP = O-phospho-L-seryl-[protein] + ADP + H(+). It carries out the reaction L-threonyl-[protein] + ATP = O-phospho-L-threonyl-[protein] + ADP + H(+). Casein kinases are operationally defined by their preferential utilization of acidic proteins such as caseins as substrates. This is Casein kinase I homolog 2 (YCK2) from Saccharomyces cerevisiae (strain ATCC 204508 / S288c) (Baker's yeast).